The chain runs to 304 residues: Ribonuclease Z (304 aa).

Residues histidine 61, histidine 63, aspartate 65, histidine 66, histidine 138, aspartate 206, and histidine 265 each contribute to the Zn(2+) site. Aspartate 65 acts as the Proton acceptor in catalysis.

The protein belongs to the RNase Z family. As to quaternary structure, homodimer. Requires Zn(2+) as cofactor.

It catalyses the reaction Endonucleolytic cleavage of RNA, removing extra 3' nucleotides from tRNA precursor, generating 3' termini of tRNAs. A 3'-hydroxy group is left at the tRNA terminus and a 5'-phosphoryl group is left at the trailer molecule.. Functionally, zinc phosphodiesterase, which displays some tRNA 3'-processing endonuclease activity. Probably involved in tRNA maturation, by removing a 3'-trailer from precursor tRNA. The sequence is that of Ribonuclease Z from Lachnospira eligens (strain ATCC 27750 / DSM 3376 / VPI C15-48 / C15-B4) (Eubacterium eligens).